Consider the following 360-residue polypeptide: Pyrimidine monooxygenase RutA (360 aa).

Residues 49–50 (IK), Asn-115, Glu-124, 140–141 (RY), and Ser-190 each bind FMN.

Belongs to the NtaA/SnaA/DszA monooxygenase family. RutA subfamily.

It catalyses the reaction uracil + FMNH2 + NADH + O2 = (Z)-3-ureidoacrylate + FMN + NAD(+) + H2O + H(+). It carries out the reaction thymine + FMNH2 + NADH + O2 = (Z)-2-methylureidoacrylate + FMN + NAD(+) + H2O + H(+). Its function is as follows. Catalyzes the pyrimidine ring opening between N-3 and C-4 by an unusual flavin hydroperoxide-catalyzed mechanism, adding oxygen atoms in the process to yield ureidoacrylate peracid, that immediately reacts with FMN forming ureidoacrylate and FMN-N(5)-oxide. The FMN-N(5)-oxide reacts spontaneously with NADH to produce FMN. Requires the flavin reductase RutF to regenerate FMN in vivo. The sequence is that of Pyrimidine monooxygenase RutA from Pseudomonas savastanoi pv. phaseolicola (strain 1448A / Race 6) (Pseudomonas syringae pv. phaseolicola (strain 1448A / Race 6)).